The chain runs to 388 residues: MTVLPKTLLLLGSGELGKEITIAAQRLGCHVIACDRYSGAPAMQVADQAEVLDMNNSEALTAIIRHHQPDVVIPEIEALAVNALAELENEGITVIPTARATAITMNRDRIRDLASAELALLTPKFAYAGSAEELKHAAEPLGWPVVVKPVMSSSGKGQSVVSNPEGLRQAWQAAMAGSRGNSPRVIVEEFLHFDLEITLLTIRQEDGSTLFCEPIGHEQIGGDYQCSWQPAELSTEQLKQAQSMALTITKNLGGVGLFGVEFFLCGNEVIFSELSPRPHDTGLVTLISQNLSEFELHLRAVLNLPIPTIQTADAAASRVILAKDNLSSISYKGVEKALSEIDTQILLFGKPNARPGRRMGVALAKGKSMEAVRSKADRAAASIQVIKG.

N(1)-(5-phospho-beta-D-ribosyl)glycinamide contacts are provided by residues 15 to 16 and E75; that span reads EL. Residues R107, K148, 153-158, 188-191, and E196 each bind ATP; these read SSGKGQ and EEFL. The ATP-grasp domain maps to 112–302; sequence DLASAELALL…EFELHLRAVL (191 aa). The Mg(2+) site is built by E261 and E273. N(1)-(5-phospho-beta-D-ribosyl)glycinamide contacts are provided by residues D280, K350, and 357-358; that span reads RR.

Belongs to the PurK/PurT family. In terms of assembly, homodimer.

The catalysed reaction is N(1)-(5-phospho-beta-D-ribosyl)glycinamide + formate + ATP = N(2)-formyl-N(1)-(5-phospho-beta-D-ribosyl)glycinamide + ADP + phosphate + H(+). The protein operates within purine metabolism; IMP biosynthesis via de novo pathway; N(2)-formyl-N(1)-(5-phospho-D-ribosyl)glycinamide from N(1)-(5-phospho-D-ribosyl)glycinamide (formate route): step 1/1. Functionally, involved in the de novo purine biosynthesis. Catalyzes the transfer of formate to 5-phospho-ribosyl-glycinamide (GAR), producing 5-phospho-ribosyl-N-formylglycinamide (FGAR). Formate is provided by PurU via hydrolysis of 10-formyl-tetrahydrofolate. The chain is Formate-dependent phosphoribosylglycinamide formyltransferase from Prochlorococcus marinus (strain MIT 9313).